The sequence spans 146 residues: Large ribosomal subunit protein uL15 (146 aa).

The interval 1-64 (MELNSIKPAA…MPMHRRLPKR (64 aa)) is disordered. A compositionally biased stretch (basic residues) spans 30-39 (TATKGHKGQK).

This sequence belongs to the universal ribosomal protein uL15 family. As to quaternary structure, part of the 50S ribosomal subunit.

Functionally, binds to the 23S rRNA. In Geotalea daltonii (strain DSM 22248 / JCM 15807 / FRC-32) (Geobacter daltonii), this protein is Large ribosomal subunit protein uL15.